Here is a 280-residue protein sequence, read N- to C-terminus: uncharacterized protein (280 aa).

The next 3 membrane-spanning stretches (helical) occupy residues 15–35, 68–88, and 94–114; these read IVDI…INRL, IGFI…ILAG, and IVIG…VFLI.

This sequence belongs to the MscS (TC 1.A.23) family.

Its subcellular location is the cell membrane. In terms of biological role, may play a role in resistance to osmotic downshock. This is an uncharacterized protein from Bacillus subtilis (strain 168).